A 274-amino-acid chain; its full sequence is Large ribosomal subunit protein uL2 (274 aa).

The segment at 223–274 (VAMNPVDHPHGGGEGRTSGGRHPVTPWGVPTKGYKTRSNKRTDKYIVRRRTK) is disordered.

Belongs to the universal ribosomal protein uL2 family. Part of the 50S ribosomal subunit. Forms a bridge to the 30S subunit in the 70S ribosome.

One of the primary rRNA binding proteins. Required for association of the 30S and 50S subunits to form the 70S ribosome, for tRNA binding and peptide bond formation. It has been suggested to have peptidyltransferase activity; this is somewhat controversial. Makes several contacts with the 16S rRNA in the 70S ribosome. This chain is Large ribosomal subunit protein uL2, found in Shewanella amazonensis (strain ATCC BAA-1098 / SB2B).